The chain runs to 251 residues: 5-oxoprolinase subunit A (251 aa).

It belongs to the LamB/PxpA family. Forms a complex composed of PxpA, PxpB and PxpC.

The enzyme catalyses 5-oxo-L-proline + ATP + 2 H2O = L-glutamate + ADP + phosphate + H(+). Catalyzes the cleavage of 5-oxoproline to form L-glutamate coupled to the hydrolysis of ATP to ADP and inorganic phosphate. The protein is 5-oxoprolinase subunit A of Vibrio campbellii (strain ATCC BAA-1116).